We begin with the raw amino-acid sequence, 802 residues long: Phenylalanine--tRNA ligase beta subunit (802 aa).

Positions 39 to 154 (AEGLSKLVVG…EDAVPGDSIF (116 aa)) constitute a tRNA-binding domain. One can recognise a B5 domain in the interval 407 to 482 (TEPVQVSTSL…RIYGYEKLPT (76 aa)). Mg(2+) contacts are provided by Asp-460, Asp-466, Glu-469, and Glu-470. An FDX-ACB domain is found at 709 to 802 (TKFPAVSRDI…LTEKVEAEVR (94 aa)).

It belongs to the phenylalanyl-tRNA synthetase beta subunit family. Type 1 subfamily. As to quaternary structure, tetramer of two alpha and two beta subunits. Requires Mg(2+) as cofactor.

It is found in the cytoplasm. It carries out the reaction tRNA(Phe) + L-phenylalanine + ATP = L-phenylalanyl-tRNA(Phe) + AMP + diphosphate + H(+). This chain is Phenylalanine--tRNA ligase beta subunit, found in Streptococcus thermophilus (strain CNRZ 1066).